Reading from the N-terminus, the 1259-residue chain is uncharacterized protein (1259 aa).

Positions 354–410 (KLNQAGGKRNSSMNNSTQNNNSSRSNNSARNNNSVWNNNNSAWKNNNSAWNDNSSWK) are disordered. Over residues 362–410 (RNSSMNNSTQNNNSSRSNNSARNNNSVWNNNNSAWKNNNSAWNDNSSWK) the composition is skewed to low complexity.

It is found in the virion. This is an uncharacterized protein from Acanthamoeba polyphaga (Amoeba).